We begin with the raw amino-acid sequence, 194 residues long: Pyridoxal 5'-phosphate synthase subunit PdxT (194 aa).

54 to 56 (GES) is a binding site for L-glutamine. The active-site Nucleophile is C83. Residues R110 and 139–140 (IR) each bind L-glutamine. Catalysis depends on charge relay system residues H175 and E177.

This sequence belongs to the glutaminase PdxT/SNO family. In terms of assembly, in the presence of PdxS, forms a dodecamer of heterodimers. Only shows activity in the heterodimer.

The catalysed reaction is aldehydo-D-ribose 5-phosphate + D-glyceraldehyde 3-phosphate + L-glutamine = pyridoxal 5'-phosphate + L-glutamate + phosphate + 3 H2O + H(+). It catalyses the reaction L-glutamine + H2O = L-glutamate + NH4(+). It functions in the pathway cofactor biosynthesis; pyridoxal 5'-phosphate biosynthesis. Catalyzes the hydrolysis of glutamine to glutamate and ammonia as part of the biosynthesis of pyridoxal 5'-phosphate. The resulting ammonia molecule is channeled to the active site of PdxS. The chain is Pyridoxal 5'-phosphate synthase subunit PdxT from Methanoregula boonei (strain DSM 21154 / JCM 14090 / 6A8).